Here is a 246-residue protein sequence, read N- to C-terminus: MADS-box transcription factor 14 (246 aa).

Residues M1 to S61 enclose the MADS-box domain. In terms of domain architecture, K-box spans Q88–V178. Residues K180–F199 are disordered.

May interact with the K-box of MADS1 and MADS6. In terms of tissue distribution, highly expressed in sterile lemmas, at intermediate levels in stamens, and weakly in lemmas, paleas and carpels.

The protein resides in the nucleus. Probable transcription factor. May be involved in the control of flowering time. This Oryza sativa subsp. japonica (Rice) protein is MADS-box transcription factor 14 (MADS14).